Reading from the N-terminus, the 292-residue chain is Histamine N-methyltransferase (292 aa).

Residue glutamate 28 coordinates substrate. Residues glycine 60, glutamate 89, glutamine 94, serine 120, and isoleucine 142 each contribute to the S-adenosyl-L-methionine site. Residue asparagine 283 coordinates substrate.

Belongs to the class I-like SAM-binding methyltransferase superfamily. HNMT family. As to quaternary structure, monomer.

It is found in the cytoplasm. It catalyses the reaction histamine + S-adenosyl-L-methionine = N(tau)-methylhistamine + S-adenosyl-L-homocysteine + H(+). Inactivates histamine by N-methylation. Plays an important role in degrading histamine and in regulating the airway response to histamine. This chain is Histamine N-methyltransferase (HNMT), found in Homo sapiens (Human).